Consider the following 1076-residue polypeptide: DNA-directed RNA polymerase subunit beta (1076 aa).

This sequence belongs to the RNA polymerase beta chain family. In plastids the minimal PEP RNA polymerase catalytic core is composed of four subunits: alpha, beta, beta', and beta''. When a (nuclear-encoded) sigma factor is associated with the core the holoenzyme is formed, which can initiate transcription.

The protein resides in the plastid. The catalysed reaction is RNA(n) + a ribonucleoside 5'-triphosphate = RNA(n+1) + diphosphate. Its function is as follows. DNA-dependent RNA polymerase catalyzes the transcription of DNA into RNA using the four ribonucleoside triphosphates as substrates. The protein is DNA-directed RNA polymerase subunit beta of Euglena longa (Euglenophycean alga).